The following is a 184-amino-acid chain: MNKNNLIGNYTIALFNNAMVDNIQDKVFEEITSINSIITDNVDIREFLFSPIVNKNDKIKAINSLAKNTKINTIVYNFLLLLIKNFRMTILSDIISVFNKLLCESKNIKIVQVISANKLKPKEQEWIKSHIEKELNQKTEILFDIDSNIIGGIVIKYDSMLQDYSIKGSLDKITKVLKKVNINT.

The protein belongs to the ATPase delta chain family. F-type ATPases have 2 components, F(1) - the catalytic core - and F(0) - the membrane proton channel. F(1) has five subunits: alpha(3), beta(3), gamma(1), delta(1), epsilon(1). F(0) has three main subunits: a(1), b(2) and c(10-14). The alpha and beta chains form an alternating ring which encloses part of the gamma chain. F(1) is attached to F(0) by a central stalk formed by the gamma and epsilon chains, while a peripheral stalk is formed by the delta and b chains.

Its subcellular location is the cell inner membrane. F(1)F(0) ATP synthase produces ATP from ADP in the presence of a proton or sodium gradient. F-type ATPases consist of two structural domains, F(1) containing the extramembraneous catalytic core and F(0) containing the membrane proton channel, linked together by a central stalk and a peripheral stalk. During catalysis, ATP synthesis in the catalytic domain of F(1) is coupled via a rotary mechanism of the central stalk subunits to proton translocation. Functionally, this protein is part of the stalk that links CF(0) to CF(1). It either transmits conformational changes from CF(0) to CF(1) or is implicated in proton conduction. The chain is ATP synthase subunit delta from Rickettsia canadensis (strain McKiel).